The sequence spans 282 residues: Bis(5'-nucleosyl)-tetraphosphatase, symmetrical (282 aa).

The protein belongs to the Ap4A hydrolase family.

It catalyses the reaction P(1),P(4)-bis(5'-adenosyl) tetraphosphate + H2O = 2 ADP + 2 H(+). Functionally, hydrolyzes diadenosine 5',5'''-P1,P4-tetraphosphate to yield ADP. This Escherichia coli O45:K1 (strain S88 / ExPEC) protein is Bis(5'-nucleosyl)-tetraphosphatase, symmetrical.